The primary structure comprises 490 residues: 7-ethoxycoumarin O-deethylase (490 aa).

Cys-432 serves as a coordination point for heme.

This sequence belongs to the cytochrome P450 family. It depends on heme as a cofactor.

Its function is as follows. Capable of dealkylating a model xenobiotic compound, 7-ethoxycoumarin. Metabolizes with high efficiency a wide range of xenobiotics, including alkoxycoumarins, alkoxyresorufins, and several herbicides of the class of phenylureas. Catalyzes the double N-dealkylation (oxidative N-demethylation) of phenylureas such as chlortoluron and isoproturon with turnover rates comparable to those reported for physiological substrates and produces non-phytotoxic compounds. Could be used for control of herbicide tolerance and selectivity, as well as soil and groundwater bioremediation. In Helianthus tuberosus (Jerusalem artichoke), this protein is 7-ethoxycoumarin O-deethylase (CYP76B1).